A 150-amino-acid polypeptide reads, in one-letter code: MKLNELYNNLGAKKNKKRIARGIGSGKGKTAGRGIKGQKSRSGVAIKGFEGGQTPMIKRLPKRGFKCISTKKYNIINIYNIEEALTDGRLSTNDIITKEKLLEVGLINNKNLVKLLSICSDDFASPLSLKLDAYSSKAKYLIEKVGGQLL.

This sequence belongs to the universal ribosomal protein uL15 family. Part of the 50S ribosomal subunit.

Its function is as follows. Binds to the 23S rRNA. The polypeptide is Large ribosomal subunit protein uL15 (Rickettsia prowazekii (strain Madrid E)).